A 540-amino-acid polypeptide reads, in one-letter code: MSAKDVKFHDSARARIVKGVNVLADAVKVTLGPKGRNVVIERSFGAPTITKDGVSVAKEIELKDRFENMGAQIVKQVASKTADVAGDGTTTATVLAQAIVQEGMKHVAAGMNPMDLKRGIDKAVAAVLDELRKLSKPISTNREIAQVGSISANADEAIGKIIADAMEKVGKEGVITVEDGKSLENELDVVEGMQFDRGYVSPYFINDPEKQAAYLDDALILLHDKKISNIRDLLPVLEATSKAGKPLLIVAEDIDGEALATLVVNAMRGILKVAAVKAPGFGDRRKAMLEDIAILTGATVISEETGKQLQKASLEDLGSAKRVEVRKEDTIIIDGAGDQERIEARVKSIRTQIDETTSDYDREKLQERVAKLAGGVAVIKVGAATEVEMKEKKDRVDDALHATRAAVEEGIVPGGGVALLRARSTATSLKGANSDQDAGIQIVLRALEAPLRVIASNAGDEPSVVIAKVLEGKGNFGYNAATGEYGDLVEAGVVDPTKVTRTALQNAASIAGLILTTDATVADAPKDEKPAQAPAPELEY.

Residues 30–33 (TLGP), Lys51, 87–91 (DGTTT), Gly415, 479–481 (NAA), and Asp495 contribute to the ATP site.

It belongs to the chaperonin (HSP60) family. As to quaternary structure, forms a cylinder of 14 subunits composed of two heptameric rings stacked back-to-back. Interacts with the co-chaperonin GroES.

The protein localises to the cytoplasm. The catalysed reaction is ATP + H2O + a folded polypeptide = ADP + phosphate + an unfolded polypeptide.. Together with its co-chaperonin GroES, plays an essential role in assisting protein folding. The GroEL-GroES system forms a nano-cage that allows encapsulation of the non-native substrate proteins and provides a physical environment optimized to promote and accelerate protein folding. This Burkholderia ambifaria (strain ATCC BAA-244 / DSM 16087 / CCUG 44356 / LMG 19182 / AMMD) (Burkholderia cepacia (strain AMMD)) protein is Chaperonin GroEL 3.